Reading from the N-terminus, the 422-residue chain is MKLYGLGVLVAIILYEKHGLAFQSGHVLSALPRTSRQVQLLQNLTTTYEVVLWQPVTAEFIEKKKEVHFFVNASDVNSVKAYLNASRIPFNVLMNNVEDLIQQQTSNDTVSPRASSSYYEQYHSLNEIYSWIEVITEQHPDMLQKIYIGSSYEKYPLYVLKVSGKEHRVKNAIWIDCGIHAREWISPAFCLWFIGYVTQFHGKENTYTRLLRHVDFYIMPVMNVDGYDYTWKKNRMWRKNRSVHMNNRCVGTDLNRNFASKHWCEKGASSFSCSETYCGLYPESEPEVKAVADFLRRNINHIKAYISMHSYSQQILFPYSYNRSKSKDHEELSLVASEAVRAIESINKNTRYTHGSGSESLYLAPGGSDDWIYDLGIKYSFTIELRDTGRYGFLLPERFIKPTCAEALAAVSKIAWHVIRNS.

An N-terminal signal peptide occupies residues 1–21 (MKLYGLGVLVAIILYEKHGLA). The propeptide at 22–113 (FQSGHVLSAL…QTSNDTVSPR (92 aa)) is activation peptide. N-linked (GlcNAc...) asparagine glycans are attached at residues asparagine 43, asparagine 72, asparagine 84, and asparagine 107. Residues 121–418 (QYHSLNEIYS…AAVSKIAWHV (298 aa)) enclose the Peptidase M14 domain. Cysteine 177 and cysteine 190 are oxidised to a cystine. Zn(2+) contacts are provided by histidine 180 and glutamate 183. Residues 180–183 (HARE) and arginine 238 contribute to the substrate site. N-linked (GlcNAc...) asparagine glycosylation occurs at asparagine 240. 2 disulfide bridges follow: cysteine 249/cysteine 273 and cysteine 264/cysteine 278. 255–256 (NR) lines the substrate pocket. Position 309 (histidine 309) interacts with Zn(2+). Substrate is bound at residue 310-311 (SY). Asparagine 322 is a glycosylation site (N-linked (GlcNAc...) asparagine). Residue tyrosine 362 coordinates substrate. The active-site Proton donor/acceptor is glutamate 384.

This sequence belongs to the peptidase M14 family. The cofactor is Zn(2+). In terms of tissue distribution, plasma; synthesized in the liver.

It is found in the secreted. It carries out the reaction Release of C-terminal Arg and Lys from a polypeptide.. Its activity is regulated as follows. TAFI/CPB2 is unique among carboxypeptidases in that it spontaneously inactivates with a short half-life, a property that is crucial for its role in controlling blood clot lysis. The zymogen is stabilized by interactions with the activation peptide. Release of the activation peptide increases a dynamic flap mobility and in time this leads to conformational changes that disrupt the catalytic site and expose a cryptic thrombin-cleavage site present at Arg-323. Cleaves C-terminal arginine or lysine residues from biologically active peptides such as kinins or anaphylatoxins in the circulation thereby regulating their activities. Down-regulates fibrinolysis by removing C-terminal lysine residues from fibrin that has already been partially degraded by plasmin. This chain is Carboxypeptidase B2 (Cpb2), found in Rattus norvegicus (Rat).